The following is a 108-amino-acid chain: uncharacterized protein (108 aa).

This is an uncharacterized protein from Methanocaldococcus jannaschii (strain ATCC 43067 / DSM 2661 / JAL-1 / JCM 10045 / NBRC 100440) (Methanococcus jannaschii).